The chain runs to 65 residues: Large ribosomal subunit protein bL35 (65 aa).

The segment at 30 to 65 is disordered; that stretch reads AFRSHLAQNKSTKQKRQSKHGTFMHPTDYKRLKDLM. Basic and acidic residues predominate over residues 56–65; it reads TDYKRLKDLM.

Belongs to the bacterial ribosomal protein bL35 family.

This is Large ribosomal subunit protein bL35 from Mycoplasma mobile (strain ATCC 43663 / 163K / NCTC 11711) (Mesomycoplasma mobile).